We begin with the raw amino-acid sequence, 91 residues long: Elongation factor 1-beta (91 aa).

Belongs to the EF-1-beta/EF-1-delta family.

Functionally, promotes the exchange of GDP for GTP in EF-1-alpha/GDP, thus allowing the regeneration of EF-1-alpha/GTP that could then be used to form the ternary complex EF-1-alpha/GTP/AAtRNA. The polypeptide is Elongation factor 1-beta (Saccharolobus islandicus (strain Y.N.15.51 / Yellowstone #2) (Sulfolobus islandicus)).